A 304-amino-acid chain; its full sequence is Probable HTH-type transcriptional regulator LgoR (304 aa).

Residues 1-70 enclose the HTH gntR-type domain; that stretch reads MSRSQNLRHN…VGNDYVIARK (70 aa). A DNA-binding region (H-T-H motif) is located at residues 31 to 50; sequence QSALAEMYNISRTTVRHILS.

Functionally, may be a positive transcriptional regulator for lgoD and/or lgoT. Is essential for growth on L-galactonate as the sole carbon source. The sequence is that of Probable HTH-type transcriptional regulator LgoR (lgoR) from Escherichia coli (strain K12).